The sequence spans 387 residues: MDKADRDAVIEHATQVKRLVHDPHSFLTELVAQQQQYHCIAWLCHFNILSNIPQPPESIAYSDVATKAQVPLSKLQSVARMAMTTGLLSETKDGKLSHNTLSAQFITNVHMKTQLLHIVNQTVPLMTGLIQATWKWGETSATNETAYNIIHGTELSFFEHLKTRPDLNEGFQAYMKSRAVSHTGSNVEHLLNAFDWKALGQAQVVDIGGSSGSTSIMLATAFPLLNLVIEDLPEPIENAKARLSELPSDIKSRIEIMAYDFFTPQPVKNADVYLLRTILHDWPDADAIKIIQGIVAAMGPSSRLLIMDMVLPKPGSGSVTFEAALRQKDLTMIQCFNAQEREVEEWKALLTKADPRLKIQAIERPAGSELSVIEAMLDESPEQAAWF.

Asp-231 is a binding site for S-adenosyl-L-methionine. His-280 (proton acceptor) is an active-site residue.

It belongs to the class I-like SAM-binding methyltransferase superfamily. Cation-independent O-methyltransferase family. COMT subfamily.

Its pathway is polyketide biosynthesis. O-methyltransferase; part of the gene cluster that mediates the biosynthesis of fusarubins, highly pigmented naphthoquinones responsible for the coloration of the fruiting bodies. The non-reducing polyketide synthase FSR1 is responsible for the condensation of seven acetyl-CoA units to yield a haptaketide. After rings A and B are formed by aldol-type cyclization, the PKS-derived product is released as 6-O-demethylfusarubinaldehyde. Then, two hydroxyl groups at C-5 and C-10 are incorporated by FSR3, and simultaneously hydroxyl groups at C-6 and C-8 are methylated by FSR2. The aldehyde is, on the one hand, reduced by FSR3 to 8-O-methylfusarubin alcohol, which equilibrates mainly with 8-O-methylfusarubin and only small amounts of 8-O-methylnectriafurone. On the other hand, the aldehyde can be oxidized to form 8-O-methylfusarubinic acid, a reaction driven by FSR3 equilibrating with 8-O-methylfusarubinlactone, finally resulting in 8-O-methylanhydrofusarubinlactol after a further reduction step and loss of water. 8-O-Methylfusarubinic acid can also undergo decarboxylation, resulting in 8-O-methyl-13-hydroxynorjavanicin after another hydroxylation step at C-13. Both steps are most likely also accomplished by FSR3. No enzymatic function has been determined so far for either FSR4 and FSR5. Their deletion does not alter the product spectrum, but the possibility that they catalyze specific enzymatic steps during perithecium development cannot be ruled out. FSR4 might possess a regulatory function in the biosynthesis of fusarubins. The polypeptide is O-methyltransferase fsr2 (Gibberella fujikuroi (strain CBS 195.34 / IMI 58289 / NRRL A-6831) (Bakanae and foot rot disease fungus)).